The following is a 327-amino-acid chain: Probable serine/threonine-protein kinase WNK5 (327 aa).

A disordered region spans residues 1–48 (MPPNPTPPRRATTTTTRATSGVRRGEEEQGGMAVSASAGEEEEAFEEV). Low complexity predominate over residues 9 to 19 (RRATTTTTRAT). Positions 39 to 48 (GEEEEAFEEV) are enriched in acidic residues. The Protein kinase domain occupies 55–314 (GRYADVLGLG…AAELLRDPFF (260 aa)). 136–139 (TEVC) lines the ATP pocket. The active-site Proton acceptor is the Asp203.

It belongs to the protein kinase superfamily. Ser/Thr protein kinase family. WNK subfamily.

It catalyses the reaction L-seryl-[protein] + ATP = O-phospho-L-seryl-[protein] + ADP + H(+). The enzyme catalyses L-threonyl-[protein] + ATP = O-phospho-L-threonyl-[protein] + ADP + H(+). This is Probable serine/threonine-protein kinase WNK5 (WNK5) from Oryza sativa subsp. japonica (Rice).